A 50-amino-acid polypeptide reads, in one-letter code: Sperm protamine P1 (50 aa).

2 cysteine pairs are disulfide-bonded: cysteine 7–cysteine 15 and cysteine 38–cysteine 46.

It belongs to the protamine P1 family. Cross-linked by interchain disulfide bonds around the DNA-helix. In terms of tissue distribution, testis.

The protein localises to the nucleus. Its subcellular location is the chromosome. Protamines substitute for histones in the chromatin of sperm during the haploid phase of spermatogenesis. They compact sperm DNA into a highly condensed, stable and inactive complex. The chain is Sperm protamine P1 (PRM1) from Equus caballus (Horse).